The primary structure comprises 331 residues: Protein RecA (331 aa).

66–73 (GPESSGKT) lines the ATP pocket.

The protein belongs to the RecA family.

The protein resides in the cytoplasm. Functionally, can catalyze the hydrolysis of ATP in the presence of single-stranded DNA, the ATP-dependent uptake of single-stranded DNA by duplex DNA, and the ATP-dependent hybridization of homologous single-stranded DNAs. It interacts with LexA causing its activation and leading to its autocatalytic cleavage. The polypeptide is Protein RecA (Lactobacillus delbrueckii subsp. bulgaricus (strain ATCC 11842 / DSM 20081 / BCRC 10696 / JCM 1002 / NBRC 13953 / NCIMB 11778 / NCTC 12712 / WDCM 00102 / Lb 14)).